The chain runs to 200 residues: NADH-quinone oxidoreductase subunit C (200 aa).

Belongs to the complex I 30 kDa subunit family. NDH-1 is composed of 14 different subunits. Subunits NuoB, C, D, E, F, and G constitute the peripheral sector of the complex.

The protein resides in the cell inner membrane. The enzyme catalyses a quinone + NADH + 5 H(+)(in) = a quinol + NAD(+) + 4 H(+)(out). Its function is as follows. NDH-1 shuttles electrons from NADH, via FMN and iron-sulfur (Fe-S) centers, to quinones in the respiratory chain. The immediate electron acceptor for the enzyme in this species is believed to be ubiquinone. Couples the redox reaction to proton translocation (for every two electrons transferred, four hydrogen ions are translocated across the cytoplasmic membrane), and thus conserves the redox energy in a proton gradient. The protein is NADH-quinone oxidoreductase subunit C of Rhizobium johnstonii (strain DSM 114642 / LMG 32736 / 3841) (Rhizobium leguminosarum bv. viciae).